A 513-amino-acid polypeptide reads, in one-letter code: ATP synthase subunit alpha 2 (513 aa).

Residue 169–176 (GDRQVGKT) coordinates ATP.

The protein belongs to the ATPase alpha/beta chains family. As to quaternary structure, F-type ATPases have 2 components, CF(1) - the catalytic core - and CF(0) - the membrane proton channel. CF(1) has five subunits: alpha(3), beta(3), gamma(1), delta(1), epsilon(1). CF(0) has three main subunits: a(1), b(2) and c(9-12). The alpha and beta chains form an alternating ring which encloses part of the gamma chain. CF(1) is attached to CF(0) by a central stalk formed by the gamma and epsilon chains, while a peripheral stalk is formed by the delta and b chains.

Its subcellular location is the cell inner membrane. The enzyme catalyses ATP + H2O + 4 H(+)(in) = ADP + phosphate + 5 H(+)(out). Produces ATP from ADP in the presence of a proton gradient across the membrane. The alpha chain is a regulatory subunit. This Psychromonas ingrahamii (strain DSM 17664 / CCUG 51855 / 37) protein is ATP synthase subunit alpha 2.